Consider the following 186-residue polypeptide: Large ribosomal subunit protein eL18B (186 aa).

K50 carries the N6,N6,N6-trimethyllysine modification. A Glycyl lysine isopeptide (Lys-Gly) (interchain with G-Cter in ubiquitin) cross-link involves residue K116.

It belongs to the eukaryotic ribosomal protein eL18 family. Component of the large ribosomal subunit (LSU). Mature yeast ribosomes consist of a small (40S) and a large (60S) subunit. The 40S small subunit contains 1 molecule of ribosomal RNA (18S rRNA) and 33 different proteins (encoded by 57 genes). The large 60S subunit contains 3 rRNA molecules (25S, 5.8S and 5S rRNA) and 46 different proteins (encoded by 81 genes). eL18 interacts with NAP1.

The protein resides in the cytoplasm. Component of the ribosome, a large ribonucleoprotein complex responsible for the synthesis of proteins in the cell. The small ribosomal subunit (SSU) binds messenger RNAs (mRNAs) and translates the encoded message by selecting cognate aminoacyl-transfer RNA (tRNA) molecules. The large subunit (LSU) contains the ribosomal catalytic site termed the peptidyl transferase center (PTC), which catalyzes the formation of peptide bonds, thereby polymerizing the amino acids delivered by tRNAs into a polypeptide chain. The nascent polypeptides leave the ribosome through a tunnel in the LSU and interact with protein factors that function in enzymatic processing, targeting, and the membrane insertion of nascent chains at the exit of the ribosomal tunnel. The sequence is that of Large ribosomal subunit protein eL18B from Saccharomyces cerevisiae (strain ATCC 204508 / S288c) (Baker's yeast).